We begin with the raw amino-acid sequence, 327 residues long: MSHLAELVASAKAAISQASDVAALDNVRVEYLGKKGHLTLQMTTLRELPPEERPAAGAVINEAKEQVQQALNARKAELESAALNARLAAETIDVSLPGRRIENGGLHPVTRTIDRIESFFGELGFTVATGPEIEDDYHNFDALNIPGHHPARADHDTFWFDATRLLRTQTSGVQIRTMKAQQPPIRIIAPGRVYRNDYDQTHTPMFHQMEGLIVDTNISFTNLKGTLHDFLRNFFEEDLQIRFRPSYFPFTEPSAEVDVMGKNGKWLEVLGCGMVHPNVLRNVSIDPEVYSGFAFGMGMERLTMLRYGVTDLRSFFENDLRFLKQFK.

Glu-252 provides a ligand contact to Mg(2+).

This sequence belongs to the class-II aminoacyl-tRNA synthetase family. Phe-tRNA synthetase alpha subunit type 1 subfamily. In terms of assembly, tetramer of two alpha and two beta subunits. Mg(2+) is required as a cofactor.

It is found in the cytoplasm. The enzyme catalyses tRNA(Phe) + L-phenylalanine + ATP = L-phenylalanyl-tRNA(Phe) + AMP + diphosphate + H(+). In Shigella flexneri, this protein is Phenylalanine--tRNA ligase alpha subunit.